We begin with the raw amino-acid sequence, 473 residues long: Sun domain-containing protein 1 (473 aa).

A disordered region spans residues 1–47; sequence MALRHTISPQFSNRHSPPVTRSVSRTGVHQPLDTSTPVTRRDSQPGT. Positions 7-47 are enriched in polar residues; the sequence is ISPQFSNRHSPPVTRSVSRTGVHQPLDTSTPVTRRDSQPGT. 2 coiled-coil regions span residues 163–191 and 204–235; these read ISNL…LENV and EELK…STKI. Positions 237-257 are disordered; sequence HSTPEKAPETAPTASLPPSSQ. Over residues 248–257 the composition is skewed to polar residues; it reads PTASLPPSSQ. A helical transmembrane segment spans residues 262 to 282; it reads HITRRALLGVNVANSLIGASI. The SUN domain maps to 279–443; it reads GASIDHSCSS…YLIRVYGEPV (165 aa). The interval 443-473 is disordered; the sequence is VDPPKETQPMTDNGTESKLESAIVNSVSETA.

Its subcellular location is the nucleus membrane. The protein resides in the nucleus envelope. Its function is as follows. Involved in centrosome attachment to the nucleus. Required for zyg-12 localization to the nuclear envelope. Together with pot-1, it is required to anchor telomeres to the nuclear envelope in embryos. The protein is Sun domain-containing protein 1 of Caenorhabditis elegans.